The following is a 242-amino-acid chain: 3-deoxy-manno-octulosonate cytidylyltransferase (242 aa).

Belongs to the KdsB family.

The protein localises to the cytoplasm. The catalysed reaction is 3-deoxy-alpha-D-manno-oct-2-ulosonate + CTP = CMP-3-deoxy-beta-D-manno-octulosonate + diphosphate. It functions in the pathway nucleotide-sugar biosynthesis; CMP-3-deoxy-D-manno-octulosonate biosynthesis; CMP-3-deoxy-D-manno-octulosonate from 3-deoxy-D-manno-octulosonate and CTP: step 1/1. It participates in bacterial outer membrane biogenesis; lipopolysaccharide biosynthesis. Functionally, activates KDO (a required 8-carbon sugar) for incorporation into bacterial lipopolysaccharide in Gram-negative bacteria. The protein is 3-deoxy-manno-octulosonate cytidylyltransferase of Anaeromyxobacter dehalogenans (strain 2CP-1 / ATCC BAA-258).